The primary structure comprises 155 residues: Endoribonuclease YbeY (155 aa).

His-114, His-118, and His-124 together coordinate Zn(2+).

It belongs to the endoribonuclease YbeY family. It depends on Zn(2+) as a cofactor.

Its subcellular location is the cytoplasm. Single strand-specific metallo-endoribonuclease involved in late-stage 70S ribosome quality control and in maturation of the 3' terminus of the 16S rRNA. This Photorhabdus laumondii subsp. laumondii (strain DSM 15139 / CIP 105565 / TT01) (Photorhabdus luminescens subsp. laumondii) protein is Endoribonuclease YbeY.